We begin with the raw amino-acid sequence, 175 residues long: Ribosome maturation factor RimM (175 aa).

Positions 96-172 (PDTYYDHQLE…LIEIDPPDGL (77 aa)) constitute a PRC barrel domain.

It belongs to the RimM family. Binds ribosomal protein uS19.

The protein localises to the cytoplasm. An accessory protein needed during the final step in the assembly of 30S ribosomal subunit, possibly for assembly of the head region. Essential for efficient processing of 16S rRNA. May be needed both before and after RbfA during the maturation of 16S rRNA. It has affinity for free ribosomal 30S subunits but not for 70S ribosomes. The polypeptide is Ribosome maturation factor RimM (Mycobacterium avium (strain 104)).